The following is a 724-amino-acid chain: Disks large homolog 4 (724 aa).

2 S-palmitoyl cysteine lipidation sites follow: Cys-3 and Cys-5. Residues 15–35 (QDEDTPPLEHSPAHLPNQANS) form a disordered region. PDZ domains lie at 65–151 (EITL…VMRR) and 160–246 (EIKL…VAKP). Phosphoserine occurs at positions 73 and 142. Tyr-240 is subject to Phosphotyrosine. Phosphoserine is present on Ser-295. Positions 313 to 393 (RIVIHRGSTG…QTVTIIAQYK (81 aa)) constitute a PDZ 3 domain. 2 positions are modified to phosphoserine: Ser-415 and Ser-418. Thr-420 carries the phosphothreonine modification. Residues Ser-422, Ser-425, Ser-449, and Ser-480 each carry the phosphoserine modification. Positions 428–498 (KRGFYIRALF…PSKRRVERRE (71 aa)) constitute an SH3 domain. The Guanylate kinase-like domain occupies 534 to 709 (ARPIIILGPT…IYHKVKRVIE (176 aa)). Tyr-580 is subject to Phosphotyrosine. A phosphoserine mark is found at Ser-606 and Ser-654. Tyr-715 is modified (phosphotyrosine).

Belongs to the MAGUK family. Interacts through its PDZ domains with ANO2 and NETO1. Interacts through its first two PDZ domains with GRIN2A, GRIN2B, GRIN2C, GRIN2D. Interacts with ASIC3. Interacts with SEMA4C. Interacts with CXADR. Interacts with KCND2. Interacts with SYNGAP1. Interacts with LRRC4 and LRRC4B. Interacts with ERBB4. Interacts with KCNA1, KCNA2, KCNA3 and KCNA4. Interacts through its first PDZ domain with GRIK2, KCNA4 and CRIPT. Interacts through its second PDZ domain with the PDZ domain of NOS1 or the C-terminus of CAPON. Interacts through its third PDZ domain with NLGN1 and CRIPT, and probably with NLGN2 and NLGN3. Interacts through its guanylate kinase-like domain with KIF13B. Interacts through its guanylate kinase-like domain with DLGAP1/GKAP, DLGAP2, DLGAP3, DLGAP4, MAP1A, BEGAIN and SIPA1L1. Isoform 2 interacts through an L27 domain with HGS/HRS and the first L27 domain of CASK. Interacts with ADR1B and ANKS1B. May interact with HTR2A. Interacts with ADAM22. Interacts with KLHL17 and LGI1. Interacts with FRMPD4 (via C-terminus). Interacts with LRFN1, LRFN2 and LRFN4. Interacts (via N-terminal tandem pair of PDZ domains) with GPER1 (via C-terminus tail motif); the interaction is direct and induces the increase of GPER1 protein levels residing at the plasma membrane surface in a estradiol-independent manner. Interacts (via N-terminus tandem pair of PDZ domains) with NOS1 (via N-terminal domain). Interacts with SHANK3. Interacts with KCNJ4. Interacts with GPR85. Interacts with CACNG2 and MPP2 (via the SH3-Guanylate kinase-like sub-module). Interacts with ADGRB1. Found in a complex with PRR7 and GRIN1. Interacts (via PDZ3 domain and to lesser degree via PDZ2 domain) with PRR7. Component of the postsynaptic hippocampal AMPA-type glutamate receptor (AMPAR) complex, at least composed of pore forming AMPAR subunits GRIA1, GRIA2 and GRIA3 and AMPAR auxiliary proteins SHISA6 and SHISA7. Interacts (via its first two PDZ domains) with SHISA6 and SHISA7 (via PDZ-binding motif); the interaction is direct. Interacts with RPH3A and GRIN2A; this ternary complex regulates NMDA receptor composition at postsynaptic membranes. Interacts with ABR and BCR. Interacts with DGKI (via PDZ-binding motif); controls the localization of DGKI to the synapse. Interacts with C9orf72, SMCR8 and RAB39B. Interacts with ZDHHC5. Interacts with PTEN (via PDZ domain-binding motif); the interaction is induced by NMDA and is required for PTEN location at postsynaptic density. Found in a complex with GRIA1, GRIA2, GRIA3, GRIA4, CACNG8 and CNIH2. Interacts with FAM81A; the interaction facilitates condensate formation via liquid-liquid phase separation. Interacts with ADGRL3. Interacts with SORCS3. In terms of processing, palmitoylated. Palmitoylation is required for targeting to postsynaptic density, plasma membrane and synapses. Palmitoylation by ZDHHC2 occurs when the synaptic activity decreases and induces DLG4 synaptic clustering. Palmitoylation by ZDHHC15 regulates trafficking to the postsynaptic density and function in synaptogenesis. Palmitoylation may play a role in glutamate receptor GRIA1 synapse clustering. Depalmitoylated by ABHD17A and ABHD17B and to a lesser extent by ABHD17C, ABHD12, ABHD13, LYPLA1 and LYPLA2. Undergoes rapid synaptic palmitoylation/depalmitoylation cycles during neuronal development which slow down in mature neurons. Ubiquitinated by MDM2 in response to NMDA receptor activation, leading to proteasome-mediated degradation of DLG4 which is required for AMPA receptor endocytosis. In terms of tissue distribution, brain.

The protein resides in the cell membrane. It localises to the postsynaptic density. The protein localises to the synapse. It is found in the cytoplasm. Its subcellular location is the cell projection. The protein resides in the axon. It localises to the dendritic spine. The protein localises to the dendrite. It is found in the presynapse. In terms of biological role, postsynaptic scaffolding protein that plays a critical role in synaptogenesis and synaptic plasticity by providing a platform for the postsynaptic clustering of crucial synaptic proteins. Interacts with the cytoplasmic tail of NMDA receptor subunits and shaker-type potassium channels. Required for synaptic plasticity associated with NMDA receptor signaling. Overexpression or depletion of DLG4 changes the ratio of excitatory to inhibitory synapses in hippocampal neurons. May reduce the amplitude of ASIC3 acid-evoked currents by retaining the channel intracellularly. May regulate the intracellular trafficking of ADR1B. Also regulates AMPA-type glutamate receptor (AMPAR) immobilization at postsynaptic density keeping the channels in an activated state in the presence of glutamate and preventing synaptic depression. Under basal conditions, cooperates with FYN to stabilize palmitoyltransferase ZDHHC5 at the synaptic membrane through FYN-mediated phosphorylation of ZDHHC5 and its subsequent inhibition of association with endocytic proteins. The sequence is that of Disks large homolog 4 from Homo sapiens (Human).